We begin with the raw amino-acid sequence, 270 residues long: MATFDLRNTPSVTIPAPVQLRNVVRQFGRQRVIDGLDLDIAAGEFVALLGASGSGKTTLLRTLAGLDSIDSGELRVPVARAAVFQEPRLMPWKSAWKNVVLGLRVNDAKARAHAALTEVGLAHRLNAFPATLSGGEAQRVALARGLVREPKLLLLDEPFAALDALTRIRMHQLIIDLWRKHTPAVLLVTHDVDEAILLADRVIVLADGKIADDIRIDLPRQRDSGQAGFQLIRSRLLGLLGVKGAEPDTAPQASAPDSTFSELRRVASAR.

An ABC transporter domain is found at 18–232; it reads VQLRNVVRQF…DSGQAGFQLI (215 aa). 50–57 lines the ATP pocket; sequence GASGSGKT. The tract at residues 247–270 is disordered; that stretch reads PDTAPQASAPDSTFSELRRVASAR. The span at 251–261 shows a compositional bias: polar residues; the sequence is PQASAPDSTFS.

Belongs to the ABC transporter superfamily. Aliphatic sulfonates importer (TC 3.A.1.17.2) family. The complex is composed of two ATP-binding proteins (SsuB), two transmembrane proteins (SsuC) and a solute-binding protein (SsuA).

It localises to the cell inner membrane. The enzyme catalyses ATP + H2O + aliphatic sulfonate-[sulfonate-binding protein]Side 1 = ADP + phosphate + aliphatic sulfonateSide 2 + [sulfonate-binding protein]Side 1.. Functionally, part of the ABC transporter complex SsuABC involved in aliphatic sulfonates import. Responsible for energy coupling to the transport system. The sequence is that of Aliphatic sulfonates import ATP-binding protein SsuB 1 from Pseudomonas syringae pv. tomato (strain ATCC BAA-871 / DC3000).